The chain runs to 519 residues: FAD-dependent monooxygenase macF (519 aa).

The first 20 residues, 1-20, serve as a signal peptide directing secretion; it reads MTKMTSIIGILMGVLTTATA. The FAD-binding PCMH-type domain maps to 88–262; that stretch reads CRLNASCIVT…TEYDLTTNTG (175 aa). H125 carries the post-translational modification Pros-8alpha-FAD histidine.

The protein belongs to the oxygen-dependent FAD-linked oxidoreductase family.

The protein operates within secondary metabolite biosynthesis; terpenoid biosynthesis. Its function is as follows. FAD-dependent monooxygenase; part of the gene cluster that mediates the biosynthesis of macrophorins, isoprenoid epoxycyclohexenones containing cyclized drimane moieties. The first step of the pathway is the synthesis of 6-methylsalicylic acid (6-MSA) by the polyketide synthase macA. 6-MSA is then converted to m-cresol by the decarboxylase macB. The cytochrome P450 monooxygenase macC then catalyzes the oxidation of m-cresol to toluquinol. Epoxidation of toluquinol is then performed by the short chain dehydrogenase macD, with the help of macE, and a further prenylation by macG leads to 7-deacetoxyyanuthone A. The next step is the hydroxylation of C-22 of 7-deacetoxyyanuthone A by the cytochrome P450 monooxygenase macH to yield 22-deacetylyanuthone A. O-Mevalon transferase macI then attaches mevalon to the hydroxyl group of 22-deacetylyanuthone A to produce yanuthone E. The terpene cyclase macJ catalyzes the cyclization of 22-deacetylyanuthone A to macrophorin A. MacJ is also able to catalyze cyclization of yanuthone E and 7-deacetoxyyanuthone A to their corresponding macrophorins. The macJ products can be further modified by macH and macJ, as well as by the FAD-dependent monooxygenase macF, to produce additional macrophorins, including 4'-oxomacrophorin A, 4'-oxomacrophorin D and 4'-oxomacrophorin E. The sequence is that of FAD-dependent monooxygenase macF from Penicillium terrestre.